The sequence spans 369 residues: Coproporphyrin III ferrochelatase (369 aa).

Residues Ser61 and Tyr130 each contribute to the Fe-coproporphyrin III site. 2 residues coordinate Fe(2+): His197 and Glu286.

Belongs to the ferrochelatase family.

The protein localises to the cytoplasm. It catalyses the reaction Fe-coproporphyrin III + 2 H(+) = coproporphyrin III + Fe(2+). Its pathway is porphyrin-containing compound metabolism; protoheme biosynthesis. Functionally, involved in coproporphyrin-dependent heme b biosynthesis. Catalyzes the insertion of ferrous iron into coproporphyrin III to form Fe-coproporphyrin III. The chain is Coproporphyrin III ferrochelatase from Corynebacterium diphtheriae (strain ATCC 700971 / NCTC 13129 / Biotype gravis).